The chain runs to 469 residues: Acetyl-CoA decarbonylase/synthase complex subunit beta 1 (469 aa).

[Ni-Fe-S] cluster-binding residues include Cys-189, Cys-192, Cys-278, and Cys-280.

Belongs to the CdhC family. In terms of assembly, monomer. The ACDS complex is made up of alpha, epsilon, beta, gamma and delta chains with a probable stoichiometry of (alpha(2)epsilon(2))(4)-beta(8)-(gamma(1)delta(1))(8) (Potential). [Ni-Fe-S] cluster serves as cofactor.

The enzyme catalyses Co(I)-[corrinoid Fe-S protein] + acetyl-CoA + H(+) = methyl-Co(III)-[corrinoid Fe-S protein] + CO + CoA. It participates in one-carbon metabolism; methanogenesis from acetate. In terms of biological role, part of a complex that catalyzes the reversible cleavage of acetyl-CoA, allowing growth on acetate as sole source of carbon and energy. The alpha-epsilon complex generates CO from CO(2), while the beta subunit (this protein) combines the CO with CoA and a methyl group to form acetyl-CoA. The methyl group, which is incorporated into acetyl-CoA, is transferred to the beta subunit by a corrinoid iron-sulfur protein (the gamma-delta complex). In Methanosarcina thermophila, this protein is Acetyl-CoA decarbonylase/synthase complex subunit beta 1 (cdhC1).